A 703-amino-acid chain; its full sequence is MEALLEGIQNRGHGGGFLTSCEAELQELMKQIDIMVAHKKSEWEGRTHALETCLKIREQELKSLRSQLDVTHKEVGMLHQQVEEHEKIKQEMTMEYKQELKKLHEELCILKRSYEKLQKKQMREFRGNTKNHREDRSEIERLTAKIEEFRQKSLDWEKQRLIYQQQVSSLEAQRKALAEQSEIIQAQLVNRKQKLESVELSSQSEIQHLSSKLERANDTICANELEIERLTMRVNDLVGTSMTVLQEQQQKEEKLRESEKLLEALQEEKRELKAALQSQENLIHEARIQKEKLQEKVKATNTQHAVEAIRPREESLAEKKYTSQGQGDLDSVLSQLNFTHTSEDLLQAEVTCLEGSLESVSATCKQLSQELMEKYEELKRMEAHNNEYKAEIKKLKEQILQGEQSYSSALEGMKMEISHLTQELHQRDITIASTKGSSSDMEKRLRAEMQKAEDKAVEHKEILDQLESLKLENRHLSEMVMKLELGLHEAKEISLADLQENYIEALNKLVSENQQLQKDLMNTKSQLEISTQMCKKQNDRIFKPTHSRTTEFKNTEFKPTHGQHRHDGIKTEHYKTDLHSPRGQASDSINPMSRVLSPLSPQISPCSSTRSLTSYSLCKTHSLPSALDTNEANFSDTMSESMNDQEEFISSCSLPVSPLGSIATRFLEEEELRSHHILERLDAHIEELKRESEKTVRQFTALK.

The residue at position 1 (Met-1) is an N-acetylmethionine. Coiled coils occupy residues 22 to 199, 242 to 306, 353 to 533, and 676 to 703; these read EAEL…ESVE, MTVL…QHAV, LEGS…STQM, and HILERLDAHIEELKRESEKTVRQFTALK. Phosphoserine is present on Ser-278.

This sequence belongs to the CEP63 family. Interacts with CEP152 and CDK1; these interactions recruit both ligands to centrosomes. Interacts with CDK2, CDK5RAP2, WDR62, CEP90, KIAA0753/moonraker and CCDC14. CEP63, CDK5RAP2, CEP152, WDR62 are proposed to form a stepwise assembled complex at the centrosome forming a ring near parental centrioles. Interacts with CCDC57; the interaction is required for their location to proximal end of centrioles. Interacts with FXR1; promoting its stabilization. In terms of assembly, (Microbial infection) Interacts with zika virus serine protease NS3; this interaction disorganizes the centrosome. Polyubiquitinated via 'Lys-48'-linked ubiquitin, leading to its degradation. Deubiquitinated by USP36, promoting its stabilization.

The protein resides in the cytoplasm. It localises to the cytoskeleton. The protein localises to the microtubule organizing center. It is found in the centrosome. Its subcellular location is the centriole. The protein resides in the centriolar satellite. In terms of biological role, required for normal spindle assembly. Plays a key role in mother-centriole-dependent centriole duplication; the function seems also to involve CEP152, CDK5RAP2 and WDR62 through a stepwise assembled complex at the centrosome that recruits CDK2 required for centriole duplication. Reported to be required for centrosomal recruitment of CEP152; however, this function has been questioned. Also recruits CDK1 to centrosomes. Plays a role in DNA damage response. Following DNA damage, such as double-strand breaks (DSBs), is removed from centrosomes; this leads to the inactivation of spindle assembly and delay in mitotic progression. Promotes stabilization of FXR1 protein by inhibiting FXR1 ubiquitination. This Homo sapiens (Human) protein is Centrosomal protein of 63 kDa.